Reading from the N-terminus, the 395-residue chain is Renin (395 aa).

The first 21 residues, 1-21, serve as a signal peptide directing secretion; that stretch reads MLRSWEFVLLISCFLCFSSDA. A propeptide spans 22–43 (activation peptide); that stretch reads LQRISLKKMPSIRETLQEMGMK. Residue Asn-64 is glycosylated (N-linked (GlcNAc...) asparagine). Residues 79-392 form the Peptidase A1 domain; that stretch reads YYGEISIGTP…DRQNNRIGFA (314 aa). Asp-97 is an active-site residue. Disulfide bonds link Cys-110-Cys-117 and Cys-274-Cys-278. Asp-283 is a catalytic residue. Cysteines 316 and 351 form a disulfide.

This sequence belongs to the peptidase A1 family. Post-translationally, N-glycosylated. As to expression, expressed by the venom gland (at protein level).

The protein localises to the secreted. It catalyses the reaction Cleavage of Leu-|-Xaa bond in angiotensinogen to generate angiotensin I.. Its activity is regulated as follows. Inhibited completely by aspartyl protease inhibitor pepstatin A, but not by the serine- or metalloproteinase inhibitors PMSF or EDTA. Its function is as follows. Renin is a highly specific endopeptidase, whose only known function is to generate angiotensin I from angiotensinogen in the plasma, initiating a cascade of reactions that produce an elevation of blood pressure and increased sodium retention by the kidney. This protein is also found in snake venom and shown to specifically cleave human and porcine angiotensinogen into angiotensin I. It does not have general protease activity, no cleavage of alpha or beta casein. May be directly responsible for elevation of blood pressure in the victims of envenomation. The chain is Renin from Echis ocellatus (Ocellated saw-scaled viper).